Here is a 352-residue protein sequence, read N- to C-terminus: Peptide chain release factor 1 (352 aa).

Gln229 carries the N5-methylglutamine modification.

The protein belongs to the prokaryotic/mitochondrial release factor family. Methylated by PrmC. Methylation increases the termination efficiency of RF1.

Its subcellular location is the cytoplasm. Its function is as follows. Peptide chain release factor 1 directs the termination of translation in response to the peptide chain termination codons UAG and UAA. This is Peptide chain release factor 1 from Granulibacter bethesdensis (strain ATCC BAA-1260 / CGDNIH1).